The chain runs to 600 residues: Chaperone protein DnaK (600 aa).

A Phosphothreonine; by autocatalysis modification is found at Thr175. Over residues 569-578 (SFAQATAQQA) the composition is skewed to low complexity. Positions 569–600 (SFAQATAQQANTSESDPKADDSNTIDAEIKQD) are disordered. Positions 583–600 (SDPKADDSNTIDAEIKQD) are enriched in basic and acidic residues.

This sequence belongs to the heat shock protein 70 family.

In terms of biological role, acts as a chaperone. This is Chaperone protein DnaK from Mesomycoplasma hyopneumoniae (strain 7448) (Mycoplasma hyopneumoniae).